The following is a 296-amino-acid chain: Phosphatidylserine decarboxylase proenzyme (296 aa).

Residues Asp92, His149, and Ser251 each act as charge relay system; for autoendoproteolytic cleavage activity in the active site. The active-site Schiff-base intermediate with substrate; via pyruvic acid; for decarboxylase activity is the Ser251. Position 251 is a pyruvic acid (Ser); by autocatalysis (Ser251).

This sequence belongs to the phosphatidylserine decarboxylase family. PSD-B subfamily. Prokaryotic type I sub-subfamily. As to quaternary structure, heterodimer of a large membrane-associated beta subunit and a small pyruvoyl-containing alpha subunit. Requires pyruvate as cofactor. In terms of processing, is synthesized initially as an inactive proenzyme. Formation of the active enzyme involves a self-maturation process in which the active site pyruvoyl group is generated from an internal serine residue via an autocatalytic post-translational modification. Two non-identical subunits are generated from the proenzyme in this reaction, and the pyruvate is formed at the N-terminus of the alpha chain, which is derived from the carboxyl end of the proenzyme. The autoendoproteolytic cleavage occurs by a canonical serine protease mechanism, in which the side chain hydroxyl group of the serine supplies its oxygen atom to form the C-terminus of the beta chain, while the remainder of the serine residue undergoes an oxidative deamination to produce ammonia and the pyruvoyl prosthetic group on the alpha chain. During this reaction, the Ser that is part of the protease active site of the proenzyme becomes the pyruvoyl prosthetic group, which constitutes an essential element of the active site of the mature decarboxylase.

It localises to the cell membrane. The catalysed reaction is a 1,2-diacyl-sn-glycero-3-phospho-L-serine + H(+) = a 1,2-diacyl-sn-glycero-3-phosphoethanolamine + CO2. It functions in the pathway phospholipid metabolism; phosphatidylethanolamine biosynthesis; phosphatidylethanolamine from CDP-diacylglycerol: step 2/2. Catalyzes the formation of phosphatidylethanolamine (PtdEtn) from phosphatidylserine (PtdSer). This is Phosphatidylserine decarboxylase proenzyme from Hahella chejuensis (strain KCTC 2396).